Reading from the N-terminus, the 58-residue chain is Metallothionein (58 aa).

The beta stretch occupies residues 1–29 (MPDPCCIDKCECKEGGCKAGCKCTSCRCT). Residues Cys-5, Cys-6, Cys-10, Cys-12, Cys-17, Cys-21, Cys-23, Cys-26, Cys-28, Cys-31, Cys-34, Cys-38, Cys-40, Cys-46, Cys-50, Cys-54, Cys-56, and Cys-57 each contribute to the a divalent metal cation site. The tract at residues 30 to 58 (PCEKCSSGCKCTTKEDCCKTCTKPCSCCP) is alpha.

This sequence belongs to the metallothionein superfamily. Type 3 family.

In terms of biological role, metallothioneins have a high content of cysteine residues that bind various heavy metals. Class I MTS in marine crustacea are involved in the sequestration of elevated levels of heavy-metal ions. This Carcinus maenas (Common shore crab) protein is Metallothionein.